The primary structure comprises 489 residues: Cytochrome P450 monooxygenase bfoB (489 aa).

Residues 1 to 18 (MLALYLIAGLLVGLLVYR) form the signal peptide. Residues N113, N348, and N386 are each glycosylated (N-linked (GlcNAc...) asparagine). Position 429 (C429) interacts with heme.

Belongs to the cytochrome P450 family. Requires heme as cofactor.

The catalysed reaction is 2 fonsecin B + NADPH + O2 + H(+) = bifonsecin B + NADP(+) + 2 H2O. It carries out the reaction 2 rubrofusarin B + NADPH + O2 + 3 H(+) = nigerone + NADP(+) + 2 H2O. It functions in the pathway secondary metabolite biosynthesis. Cytochrome P450 monooxygenase; part of the gene cluster that mediates the biosynthesis of bifonsecin B, a dimeric gamma-naphthopyrone. The first step in the biosynthesis of bifonsecin B is the production of gamma-naphthopyrone precursor YWA1 by the non-reducing polyketide synthase albA, via condensation of one acetyl-CoA starter unit with 6 malonyl-CoA units. YWA1 is then methylated by bfoE at position C-6 to yield foncesin which is further methylated at position C-8 by bfoD to produce fonsecin B. A key enzyme in the biosynthetic pathway is the cytochrome P450 monooxygenase bfoB which catalyzes the oxidative dimerization of fonsecin B to bifonsecin B. Bfob also catalyzes the oxidative dimerization of rubrofusarin B into nigerone. The stereoselectivity of bfoB is influenced by the two natural monomeric substrates; homodimerization of fonsecin B yields a stereochemically pure biaryl, M-foncerine B, while rubrofusarin B yields a mixture of enantiomers M- and P-nigerone. The sequence is that of Cytochrome P450 monooxygenase bfoB from Aspergillus brasiliensis (strain CBS 101740 / IMI 381727 / IBT 21946).